A 938-amino-acid polypeptide reads, in one-letter code: MQNSENHHPHHHHHHSDTEIIGNDRASYSGPLSGPLNKRGGKKSARFNIPESTDIGTSAGAGAKSNDDAYVEITLDVREDSVAVHSVKTAGGADVEDPELALLAKGLEKKSTLGASLVRNASSRIRQVSQELKRLASLNKRPIPTGRFDRNKSAAAHALKGLKFISKTDGGAGWAAVEKRFDEITAPTTGLLPRAKFGECIGMNKESKEFAGELYDALARRRNITTDSINKAQLKEFWDQVADQSFDTRLQTFFDMVDKDADGRITEEEVREIIGLSASANRLSTIQKQSDEYAAMIMEELDPNNLGYIMIENLEMLLLQAPNQSVQRGGESRNLSQMLSQKLKHTQEPNPLVRWYKSFMYFLLDNWQRVWVLLLWIGIMAVLFTWKYIQYKQKAAYDVMGPCVCLAKGAAETIKLNMAIILLPVCRNTITWLRNKTRLGSAVPFDDNLNFHKVIAVAIALGVAIHGLAHLTCDFPKLLNASEEAYEPMIYYFGEQPESYWWFVRGVEGVTGIIMVVLMAIAFTLATPWFRRGRVSFPKPFHKLTGFNAFWYSHHLFIIVYTLLIVHGEKLYITKDWYKRSTWMYLTVPLVLYAGERLLRAFRSSIKAVKILKVAVYPGNVLALHMSKPQGYKYKSGQYMFVNCAAVSPFEWHPFSITSAPGDDHLSVHIRTLGDWTRQLKTVFSEVCQPPPNGKSGLLRADYLQGENNPNFPRVLIDGPYGAPAQDYKQYEVVLLVGLGIGATPMISIVKDIVNNMKAMDEEENSLENGNGMSNAAQNASPNMAQKRGKSSSASGGNSFNTRRAYFYWVTREQGSFDWFKGIMNEAAEMDHKGVIEMHNYCTSVYEEGDARSALITMLQSLHHAKSGVDIVSGTRVKSHFAKPNWRNVYKRIALNHPEAKVGVFYCGAPALTKELKQHALNFSHKTSTKFDFHKENF.

The segment at 1 to 63 is disordered; that stretch reads MQNSENHHPH…DIGTSAGAGA (63 aa). Topologically, residues 1–369 are cytoplasmic; that stretch reads MQNSENHHPH…MYFLLDNWQR (369 aa). Positions 115–141 form a coiled coil; sequence ASLVRNASSRIRQVSQELKRLASLNKR. 2 EF-hand-like regions span residues 185-195 and 222-233; these read TAPTTGLLPRA and RNITTDSINKAQ. 2 EF-hand domains span residues 245–280 and 289–324; these read SFDTRLQTFFDMVDKDADGRITEEEVREIIGLSASA and QSDEYAAMIMEELDPNNLGYIMIENLEMLLLQAPNQ. Ca(2+)-binding residues include Asp258, Asp260, Asp262, Arg264, and Glu269. Residues 370–390 traverse the membrane as a helical segment; the sequence is VWVLLLWIGIMAVLFTWKYIQ. Topologically, residues 391–402 are extracellular; sequence YKQKAAYDVMGP. The helical transmembrane segment at 403 to 423 threads the bilayer; the sequence is CVCLAKGAAETIKLNMAIILL. In terms of domain architecture, Ferric oxidoreductase spans 408–565; sequence KGAAETIKLN…LFIIVYTLLI (158 aa). Residues 424–454 lie on the Cytoplasmic side of the membrane; sequence PVCRNTITWLRNKTRLGSAVPFDDNLNFHKV. Residues 455 to 475 form a helical membrane-spanning segment; that stretch reads IAVAIALGVAIHGLAHLTCDF. The Extracellular segment spans residues 476-509; sequence PKLLNASEEAYEPMIYYFGEQPESYWWFVRGVEG. The helical transmembrane segment at 510 to 530 threads the bilayer; the sequence is VTGIIMVVLMAIAFTLATPWF. The Cytoplasmic portion of the chain corresponds to 531-545; the sequence is RRGRVSFPKPFHKLT. A helical transmembrane segment spans residues 546–566; that stretch reads GFNAFWYSHHLFIIVYTLLIV. Topologically, residues 567 to 580 are extracellular; sequence HGEKLYITKDWYKR. Residues 581 to 599 traverse the membrane as a helical segment; that stretch reads STWMYLTVPLVLYAGERLL. In terms of domain architecture, FAD-binding FR-type spans 599-727; sequence LRAFRSSIKA…DGPYGAPAQD (129 aa). Over 600-732 the chain is Cytoplasmic; sequence RAFRSSIKAV…APAQDYKQYE (133 aa). A helical transmembrane segment spans residues 733–753; sequence VVLLVGLGIGATPMISIVKDI. Topologically, residues 754-938 are extracellular; that stretch reads VNNMKAMDEE…TKFDFHKENF (185 aa). The segment at 762 to 796 is disordered; the sequence is EEENSLENGNGMSNAAQNASPNMAQKRGKSSSASG. Residues 767–784 are compositionally biased toward polar residues; that stretch reads LENGNGMSNAAQNASPNM.

The protein belongs to the RBOH (TC 5.B.1.3) family. Monomer and homodimer. In terms of processing, phosphorylated by CPK. Expressed in leaves.

It localises to the membrane. Calcium-dependent NADPH oxidase that generates superoxide. May be responsible for the oxidative burst in response to pathogen attack in the leaves. In Solanum tuberosum (Potato), this protein is Respiratory burst oxidase homolog protein C (RBOHC).